The following is a 222-amino-acid chain: Ras-related protein Rab-41 (222 aa).

Residues serine 41, valine 42, glycine 43, lysine 44, threonine 45, serine 46, and threonine 63 each contribute to the GTP site. Threonine 45 serves as a coordination point for Mg(2+). The interval 58-66 is switch-I; it reads CACQATVGI. Mg(2+) is bound by residues threonine 63 and aspartate 86. Residues glycine 89, asparagine 144, lysine 145, aspartate 147, serine 174, alanine 175, and lysine 176 each coordinate GTP. A switch-II region spans residues 89 to 105; it reads GQERFHSLIPSYIRDST. Cysteine 222 carries S-geranylgeranyl cysteine lipidation.

This sequence belongs to the small GTPase superfamily. Rab family. The cofactor is Mg(2+). In terms of tissue distribution, widely expressed in brain, testis, lung, heart, ovary, colon, kidney, uterus and spleen but not in liver.

It is found in the cytoplasm. The enzyme catalyses GTP + H2O = GDP + phosphate + H(+). Regulated by guanine nucleotide exchange factors (GEFs) which promote the exchange of bound GDP for free GTP. Regulated by GTPase activating proteins (GAPs) which increase the GTP hydrolysis activity. Inhibited by GDP dissociation inhibitors (GDIs). Its function is as follows. The small GTPases Rab are key regulators of intracellular membrane trafficking, from the formation of transport vesicles to their fusion with membranes. Rabs cycle between an inactive GDP-bound form and an active GTP-bound form that is able to recruit to membranes different sets of downstream effectors directly responsible for vesicle formation, movement, tethering and fusion. RAB41 is required for normal Golgi ribbon organization and ER-to-Golgi trafficking. The chain is Ras-related protein Rab-41 from Homo sapiens (Human).